The primary structure comprises 278 residues: 3-methyl-2-oxobutanoate hydroxymethyltransferase (278 aa).

2 residues coordinate Mg(2+): Asp-43 and Asp-82. 3-methyl-2-oxobutanoate contacts are provided by residues 43 to 44, Asp-82, and Lys-112; that span reads DS. Residue Glu-114 coordinates Mg(2+). Residue Glu-181 is the Proton acceptor of the active site.

It belongs to the PanB family. In terms of assembly, homodecamer; pentamer of dimers. The cofactor is Mg(2+).

Its subcellular location is the cytoplasm. It catalyses the reaction 3-methyl-2-oxobutanoate + (6R)-5,10-methylene-5,6,7,8-tetrahydrofolate + H2O = 2-dehydropantoate + (6S)-5,6,7,8-tetrahydrofolate. The protein operates within cofactor biosynthesis; (R)-pantothenate biosynthesis; (R)-pantoate from 3-methyl-2-oxobutanoate: step 1/2. Functionally, catalyzes the reversible reaction in which hydroxymethyl group from 5,10-methylenetetrahydrofolate is transferred onto alpha-ketoisovalerate to form ketopantoate. The polypeptide is 3-methyl-2-oxobutanoate hydroxymethyltransferase (Desulfitobacterium hafniense (strain DSM 10664 / DCB-2)).